A 323-amino-acid polypeptide reads, in one-letter code: Replication factor C subunit 4 (323 aa).

ATP is bound by residues V12, V24, 49–57, N145, and R203; that span reads GMPGIGKTT.

Belongs to the activator 1 small subunits family. As to quaternary structure, replication factor C (RFC) is a heteropentamer of subunits RFC1, RFC2, RFC3, RFC4 and RFC5 and forms a complex with POL30/PCNA in the presence of ATP. Component of the RAD24-RFC complex which consists of RAD14, RFC2, RFC3, RFC4 and RFC5 and associates with the checkpoint clamp DDC1:MEC3:RAD17 complex. Component of the ELG1-RFC complex which consists of ELG1, RFC2, RFC3, RFC4 and RFC5. Component of the CTF18-RFC complex, which consists of CTF18, CTF8, DCC1, RFC2, RFC3, RFC4 and RFC5. RFC4 interacts with ECO1.

It is found in the nucleus. Its function is as follows. Component of ATP-dependent clamp loader (RFC and RFC-like) complexes for DNA clamps, such as the POL30/PCNA homotrimer and the checkpoint clamp DDC1:MEC3:RAD17 complex. During a clamp loading circle, the RFC:clamp complex binds to DNA and the recognition of the double-stranded/single-stranded junction stimulates ATP hydrolysis by RFC. The complex presumably provides bipartite ATP sites in which one subunit supplies a catalytic site for hydrolysis of ATP bound to the neighboring subunit. Dissociation of RFC from the clamp leaves the clamp encircling DNA. Component of the replication factor C (RFC or activator 1) complex which loads POL30/PCNA and acts during elongation of primed DNA templates by DNA polymerase delta and epsilon. RFC has an essential but redundant activity in sister chromatid cohesion establishment. Component of the RFC-like complex CTF18-RFC which is required for efficient establishment of chromosome cohesion during S-phase and may load or unload POL30/PCNA. Component of the RFC-like RAD24-RFC complex which loads the checkpoint clamp DDC1:MEC3:RAD17 complex and is involved in DNA repair pathways. Component of the RFC-like ELG1-RFC complex which appears to have a role in DNA replication, replication fork re-start, recombination and repair. The sequence is that of Replication factor C subunit 4 (RFC4) from Saccharomyces cerevisiae (strain ATCC 204508 / S288c) (Baker's yeast).